The following is a 523-amino-acid chain: Light-independent protochlorophyllide reductase subunit B (523 aa).

[4Fe-4S] cluster is bound at residue aspartate 36. Residue aspartate 290 is the Proton donor of the active site. Substrate is bound at residue 425–426; sequence GL.

Belongs to the ChlB/BchB/BchZ family. In terms of assembly, protochlorophyllide reductase is composed of three subunits; ChlL, ChlN and ChlB. Forms a heterotetramer of two ChlB and two ChlN subunits. It depends on [4Fe-4S] cluster as a cofactor.

The enzyme catalyses chlorophyllide a + oxidized 2[4Fe-4S]-[ferredoxin] + 2 ADP + 2 phosphate = protochlorophyllide a + reduced 2[4Fe-4S]-[ferredoxin] + 2 ATP + 2 H2O. It participates in porphyrin-containing compound metabolism; chlorophyll biosynthesis (light-independent). In terms of biological role, component of the dark-operative protochlorophyllide reductase (DPOR) that uses Mg-ATP and reduced ferredoxin to reduce ring D of protochlorophyllide (Pchlide) to form chlorophyllide a (Chlide). This reaction is light-independent. The NB-protein (ChlN-ChlB) is the catalytic component of the complex. The protein is Light-independent protochlorophyllide reductase subunit B of Prochlorococcus marinus (strain MIT 9215).